The following is a 191-amino-acid chain: Superoxide dismutase [Mn/Fe] (191 aa).

H27, H74, D157, and H161 together coordinate Fe(3+). Mn(2+) contacts are provided by H27, H74, D157, and H161.

This sequence belongs to the iron/manganese superoxide dismutase family. As to quaternary structure, homodimer. Mn(2+) is required as a cofactor. Requires Fe(3+) as cofactor.

It carries out the reaction 2 superoxide + 2 H(+) = H2O2 + O2. With respect to regulation, inhibited by hydrogen peroxide. Destroys superoxide anion radicals which are normally produced within the cells and which are toxic to biological systems. Catalyzes the dismutation of superoxide anion radicals into O2 and H2O2 by successive reduction and oxidation of the transition metal ion at the active site. The chain is Superoxide dismutase [Mn/Fe] (sodB) from Porphyromonas gingivalis (strain ATCC BAA-308 / W83).